Here is an 89-residue protein sequence, read N- to C-terminus: Putative regulatory protein PCC8801_0196 (89 aa).

The protein belongs to the RemA family.

The polypeptide is Putative regulatory protein PCC8801_0196 (Rippkaea orientalis (strain PCC 8801 / RF-1) (Cyanothece sp. (strain PCC 8801))).